A 163-amino-acid polypeptide reads, in one-letter code: Lipoprotein signal peptidase (163 aa).

4 helical membrane passes run 9 to 29 (AWPW…SKYL), 42 to 62 (ILPF…SFLG), 67 to 87 (WQII…ILWL), and 93 to 113 (SEIM…GNFI). Catalysis depends on residues D123 and D141. A helical membrane pass occupies residues 137-157 (FNVADSAICVGVFLLIVHMLL).

It belongs to the peptidase A8 family.

It localises to the cell inner membrane. The enzyme catalyses Release of signal peptides from bacterial membrane prolipoproteins. Hydrolyzes -Xaa-Yaa-Zaa-|-(S,diacylglyceryl)Cys-, in which Xaa is hydrophobic (preferably Leu), and Yaa (Ala or Ser) and Zaa (Gly or Ala) have small, neutral side chains.. The protein operates within protein modification; lipoprotein biosynthesis (signal peptide cleavage). This protein specifically catalyzes the removal of signal peptides from prolipoproteins. The chain is Lipoprotein signal peptidase from Coxiella burnetii (strain RSA 493 / Nine Mile phase I).